A 276-amino-acid polypeptide reads, in one-letter code: Insulin-like growth factor-binding protein 2-A (276 aa).

The first 22 residues, 1 to 22 (MLSYVSCGLLLALVTFHGTARS), serve as a signal peptide directing secretion. One can recognise an IGFBP N-terminal domain in the interval 24–105 (MVFRCPSCTA…VQGLGRCGRK (82 aa)). Intrachain disulfides connect Cys-28–Cys-55, Cys-31–Cys-57, Cys-39–Cys-58, Cys-46–Cys-61, Cys-69–Cys-82, Cys-76–Cys-102, Cys-180–Cys-214, Cys-225–Cys-236, and Cys-238–Cys-259. Residues 177–259 (QSQCQQELDQ…SPLIRGDPNC (83 aa)) form the Thyroglobulin type-1 domain. The short motif at 254–256 (RGD) is the Cell attachment site element.

In terms of assembly, interacts equally well with igf1 and igf2. In embryos at 24 hpf, initially expressed in the lens and cranial region, and at 48 and 72 hpf in the brain boundary vasculature. Expression in these regions persists throughout the hatching period and by 96 hpf expression is most abundant in the liver. In both male and female adults, highest expression is in the liver with modest expression in the brain. In male but not females adults, expressed at a low level in muscle and gonad. Also expressed in the adult intestine.

Its subcellular location is the secreted. Functionally, IGF-binding proteins prolong the half-life of the IGFs and have been shown to either inhibit or stimulate the growth promoting effects of the IGFs on cell culture. They alter the interaction of IGFs with their cell surface receptors. This Danio rerio (Zebrafish) protein is Insulin-like growth factor-binding protein 2-A (igfbp2a).